Consider the following 181-residue polypeptide: Regulator of G-protein signaling 5 (181 aa).

An RGS domain is found at 64-180 (SLDKLLQNNY…VRSEFYQEFI (117 aa)).

Its subcellular location is the cytoplasm. The protein localises to the membrane. In terms of biological role, inhibits signal transduction by increasing the GTPase activity of G protein alpha subunits thereby driving them into their inactive GDP-bound form. Binds to G(i)-alpha and G(o)-alpha, but not to G(s)-alpha. This chain is Regulator of G-protein signaling 5 (RGS5), found in Bos taurus (Bovine).